Reading from the N-terminus, the 663-residue chain is Heparan-alpha-glucosaminide N-acetyltransferase (663 aa).

The disordered stretch occupies residues 1 to 24; that stretch reads MTGARASAAEQRRAGRSGQARAAE. Topologically, residues 1 to 190 are lumenal, vesicle; it reads MTGARASAAE…LAVNEDPVDS (190 aa). Residues asparagine 94, asparagine 142, and asparagine 162 are each glycosylated (N-linked (GlcNAc...) asparagine). The cysteines at positions 151 and 462 are disulfide-linked. The chain crosses the membrane as a helical span at residues 191–211; sequence NLPVSIAFLIGLAVIIVISFL. At 212–275 the chain is on the cytoplasmic side; the sequence is RLLLSLDDFN…PRLRSVDTFR (64 aa). A phosphoserine mark is found at serine 243 and serine 245. The helical transmembrane segment at 276 to 296 threads the bilayer; it reads GIALILMVFVNYGGGKYWYFK. Residue histidine 297 is part of the active site. Topologically, residues 297-302 are lumenal, vesicle; sequence HASWNG. A helical transmembrane segment spans residues 303–323; sequence LTVADLVFPWFVFIMGSSIFL. The Cytoplasmic portion of the chain corresponds to 324 to 345; it reads SMTSILQRGCSKFRLLGKIAWR. A helical membrane pass occupies residues 346-366; the sequence is SFLLICIGIIIVNPNYCLGPL. At 367–374 the chain is on the lumenal, vesicle side; the sequence is SWDKVRIP. A helical membrane pass occupies residues 375–395; the sequence is GVLQRLGVTYFVVAVLELLFA. The Cytoplasmic portion of the chain corresponds to 396-420; that stretch reads KPVPEHCASERSCLSLRDITSSWPQ. Residues 421–441 traverse the membrane as a helical segment; it reads WLLILVLEGLWLGLTFLLPVP. Over 442–500 the chain is Lumenal, vesicle; sequence GCPTGYLGPGGIGDFGKYPNCTGGAAGYIDRLLLGDDHLYQHPSSAVLYHTEVAYDPEG. The helical transmembrane segment at 501-521 threads the bilayer; that stretch reads ILGTINSIVMAFLGVQAGKIL. Residues 522–529 lie on the Cytoplasmic side of the membrane; that stretch reads LYYKARTK. A helical membrane pass occupies residues 530–550; sequence DILIRFTAWCCILGLISVALT. Residues 551–564 are Lumenal, vesicle-facing; that stretch reads KVSENEGFIPVNKN. A helical transmembrane segment spans residues 565 to 585; it reads LWSLSYVTTLSSFAFFILLVL. Residues 586 to 592 are Cytoplasmic-facing; it reads YPVVDVK. Residues 593–613 traverse the membrane as a helical segment; sequence GLWTGTPFFYPGMNSILVYVG. Over 614 to 634 the chain is Lumenal, vesicle; sequence HEVFENYFPFQWKLKDNQSHK. A lysosomal targeting region region spans residues 624–635; it reads QWKLKDNQSHKE. Residues 635–655 form a helical membrane-spanning segment; sequence EHLTQNIVATALWVLIAYILY. Residues 656–663 are Cytoplasmic-facing; that stretch reads RKKIFWKI.

In terms of assembly, homooligomer. Homooligomerization is necessary for enzyme activity. Undergoes intralysosomal proteolytic cleavage; occurs within the end of the first and/or the beginning of the second luminal domain and is essential for the activation of the enzyme. In terms of processing, glycosylated. In terms of tissue distribution, widely expressed, with highest level in leukocytes, heart, liver, skeletal muscle, lung, placenta and liver.

Its subcellular location is the lysosome membrane. It carries out the reaction alpha-D-glucosaminyl-[heparan sulfate](n) + acetyl-CoA = N-acetyl-alpha-D-glucosaminyl-[heparan sulfate](n) + CoA + H(+). Lysosomal acetyltransferase that acetylates the non-reducing terminal alpha-glucosamine residue of intralysosomal heparin or heparan sulfate, converting it into a substrate for luminal alpha-N-acetyl glucosaminidase. The protein is Heparan-alpha-glucosaminide N-acetyltransferase (HGSNAT) of Homo sapiens (Human).